The chain runs to 341 residues: Probable dual-specificity RNA methyltransferase RlmN (341 aa).

Glu88 (proton acceptor) is an active-site residue. A Radical SAM core domain is found at 94–314 (EGDRATLCIS…ESHGFTCTIR (221 aa)). An intrachain disulfide couples Cys101 to Cys325. [4Fe-4S] cluster contacts are provided by Cys108, Cys112, and Cys115. S-adenosyl-L-methionine-binding positions include 153–154 (GE), Ser185, 206–208 (SLH), and His282. Residue Cys325 is the S-methylcysteine intermediate of the active site.

The protein belongs to the radical SAM superfamily. RlmN family. [4Fe-4S] cluster is required as a cofactor.

The protein localises to the cytoplasm. The enzyme catalyses adenosine(2503) in 23S rRNA + 2 reduced [2Fe-2S]-[ferredoxin] + 2 S-adenosyl-L-methionine = 2-methyladenosine(2503) in 23S rRNA + 5'-deoxyadenosine + L-methionine + 2 oxidized [2Fe-2S]-[ferredoxin] + S-adenosyl-L-homocysteine. It carries out the reaction adenosine(37) in tRNA + 2 reduced [2Fe-2S]-[ferredoxin] + 2 S-adenosyl-L-methionine = 2-methyladenosine(37) in tRNA + 5'-deoxyadenosine + L-methionine + 2 oxidized [2Fe-2S]-[ferredoxin] + S-adenosyl-L-homocysteine. Its function is as follows. Specifically methylates position 2 of adenine 2503 in 23S rRNA and position 2 of adenine 37 in tRNAs. This is Probable dual-specificity RNA methyltransferase RlmN from Porphyromonas gingivalis (strain ATCC BAA-308 / W83).